Reading from the N-terminus, the 468-residue chain is Zinc transporter SLC39A7 (468 aa).

A helical transmembrane segment spans residues 10–30; the sequence is WVAVGLLTWAALGLLVAGHEG. 2 stretches are compositionally biased toward basic and acidic residues: residues 36–56 and 64–100; these read RDVE…DFHH and HTHE…DSLH. The interval 36-116 is disordered; the sequence is RDVEEDFHGH…SHGASREAGA (81 aa). His-64 is modified (pros-methylhistidine). The next 3 helical transmembrane spans lie at 132–152, 163–183, and 208–228; these read ALGA…LIPV, LQIL…LHLI, and GPIL…LVVE. A compositionally biased stretch (basic residues) spans 237-248; it reads GHGHAHAHGHGH. Residues 237–313 form a disordered region; sequence GHGHAHAHGH…NPEEEKTGSD (77 aa). Over residues 249–312 the composition is skewed to basic and acidic residues; the sequence is SHGDSHAHGH…QNPEEEKTGS (64 aa). Helical transmembrane passes span 385-405, 409-429, and 447-467; these read LTAI…GGAV, VAGG…FIYV, and SLLE…IAHL.

It belongs to the ZIP transporter (TC 2.A.5) family. KE4/Catsup subfamily. In terms of assembly, homodimer. Rapidly phosphorylated by CK2 following Zn(2+) treatment. This phosphorylation is required for efficient cytosolic Zn(2+) release.

The protein localises to the endoplasmic reticulum membrane. It localises to the golgi apparatus. Its subcellular location is the cis-Golgi network membrane. It catalyses the reaction Zn(2+)(in) = Zn(2+)(out). In terms of biological role, transports Zn(2+) from the endoplasmic reticulum (ER)/Golgi apparatus to the cytosol, playing an essential role in the regulation of cytosolic zinc levels. Acts as a gatekeeper of zinc release from intracellular stores, requiring post-translational activation by phosphorylation on residues, resulting in activation of multiple downstream pathways leading to cell growth and proliferation. Has an essential role in B cell development and is required for proper B cell receptor signaling. Plays an important role in maintaining intestinal epithelial homeostasis and skin dermis development by regulating ER function. Controls cell signaling pathways involved in glucose metabolism in skeletal muscle. Has a protective role against ER stress in different biological contexts. Mediates Zn(2+)-induced ferroptosis. In Rattus norvegicus (Rat), this protein is Zinc transporter SLC39A7.